The sequence spans 578 residues: DNA mismatch repair protein MutL (578 aa).

The protein belongs to the DNA mismatch repair MutL/HexB family.

This protein is involved in the repair of mismatches in DNA. It is required for dam-dependent methyl-directed DNA mismatch repair. May act as a 'molecular matchmaker', a protein that promotes the formation of a stable complex between two or more DNA-binding proteins in an ATP-dependent manner without itself being part of a final effector complex. This Carboxydothermus hydrogenoformans (strain ATCC BAA-161 / DSM 6008 / Z-2901) protein is DNA mismatch repair protein MutL.